The chain runs to 44 residues: Mu-conotoxin-like Cal 12.1.3b (44 aa).

Intrachain disulfides connect Cys-3–Cys-16, Cys-11–Cys-28, Cys-18–Cys-33, and Cys-27–Cys-38. Residue Pro-23 is modified to 4-hydroxyproline. 2 positions are modified to 6'-bromotryptophan: Trp-36 and Trp-37. Pro-39 carries the post-translational modification 4-hydroxyproline. Trp-43 is subject to 6'-bromotryptophan.

As to expression, expressed by the venom duct.

The protein resides in the secreted. Functionally, mu-conotoxins block voltage-gated sodium channels. This toxin reversibly blocks voltage-gated sodium channel in cephalopods, with no alteration in the voltage dependence of sodium conductance or on the kinetics of inactivation. In Californiconus californicus (California cone), this protein is Mu-conotoxin-like Cal 12.1.3b.